Here is a 93-residue protein sequence, read N- to C-terminus: Large ribosomal subunit protein eL43 (93 aa).

The C4-type zinc finger occupies C39–C60.

This sequence belongs to the eukaryotic ribosomal protein eL43 family.

This Brassica rapa subsp. rapa (Turnip) protein is Large ribosomal subunit protein eL43 (RPL37A).